A 431-amino-acid polypeptide reads, in one-letter code: Glutamate-1-semialdehyde 2,1-aminomutase (431 aa).

The residue at position 269 (Lys269) is an N6-(pyridoxal phosphate)lysine.

The protein belongs to the class-III pyridoxal-phosphate-dependent aminotransferase family. HemL subfamily. As to quaternary structure, homodimer. It depends on pyridoxal 5'-phosphate as a cofactor.

The protein localises to the cytoplasm. The catalysed reaction is (S)-4-amino-5-oxopentanoate = 5-aminolevulinate. The protein operates within porphyrin-containing compound metabolism; protoporphyrin-IX biosynthesis; 5-aminolevulinate from L-glutamyl-tRNA(Glu): step 2/2. It functions in the pathway porphyrin-containing compound metabolism; chlorophyll biosynthesis. This is Glutamate-1-semialdehyde 2,1-aminomutase from Chlorobium phaeobacteroides (strain DSM 266 / SMG 266 / 2430).